We begin with the raw amino-acid sequence, 337 residues long: DNA-directed RNA polymerase subunit alpha (337 aa).

An alpha N-terminal domain (alpha-NTD) region spans residues 1–233 (MVREKVTVST…DLFIPFLHIE (233 aa)). Residues 265 to 337 (KKIALKSIFI…FVIDLAKNEF (73 aa)) are alpha C-terminal domain (alpha-CTD).

This sequence belongs to the RNA polymerase alpha chain family. As to quaternary structure, in plastids the minimal PEP RNA polymerase catalytic core is composed of four subunits: alpha, beta, beta', and beta''. When a (nuclear-encoded) sigma factor is associated with the core the holoenzyme is formed, which can initiate transcription.

The protein localises to the plastid. The protein resides in the chloroplast. It carries out the reaction RNA(n) + a ribonucleoside 5'-triphosphate = RNA(n+1) + diphosphate. Functionally, DNA-dependent RNA polymerase catalyzes the transcription of DNA into RNA using the four ribonucleoside triphosphates as substrates. This chain is DNA-directed RNA polymerase subunit alpha, found in Nicotiana tomentosiformis (Tobacco).